Here is a 179-residue protein sequence, read N- to C-terminus: MKGGKRVQLTRPNRINSEIRAIKVRLTGVEGDQIGIVNLREALKKSEELGLDLVEISPNAEPPVCRIMDYGKFLYEKSKSSKEQKKKQKVIHIKEIKFRPGTDEGDYQVKLRNLIRFLEDGDKAKITLRFRGREMAHQKIGVDVLNRVKNDLIELATVEYFPSKIEGRQMIMILAPKKK.

This sequence belongs to the IF-3 family. Monomer.

Its subcellular location is the cytoplasm. Functionally, IF-3 binds to the 30S ribosomal subunit and shifts the equilibrium between 70S ribosomes and their 50S and 30S subunits in favor of the free subunits, thus enhancing the availability of 30S subunits on which protein synthesis initiation begins. This is Translation initiation factor IF-3 from Buchnera aphidicola subsp. Acyrthosiphon pisum (strain 5A).